A 73-amino-acid chain; its full sequence is Conotoxin Vc6.17 (73 aa).

Residues M1–A19 form the signal peptide. Positions L20–H44 are excised as a propeptide. 3 cysteine pairs are disulfide-bonded: C48-C62, C55-C66, and C61-C71.

This sequence belongs to the conotoxin O2 superfamily. As to expression, expressed by the venom duct.

Its subcellular location is the secreted. Inhibits voltage-gated ion channels. This chain is Conotoxin Vc6.17, found in Conus victoriae (Queen Victoria cone).